The following is a 102-amino-acid chain: Small ribosomal subunit protein uS10 (102 aa).

Belongs to the universal ribosomal protein uS10 family. Part of the 30S ribosomal subunit.

In terms of biological role, involved in the binding of tRNA to the ribosomes. The protein is Small ribosomal subunit protein uS10 of Methanobrevibacter smithii (strain ATCC 35061 / DSM 861 / OCM 144 / PS).